The primary structure comprises 80 residues: Small ribosomal subunit protein bS18A (80 aa).

This sequence belongs to the bacterial ribosomal protein bS18 family. As to quaternary structure, part of the 30S ribosomal subunit. Forms a tight heterodimer with protein bS6.

Binds as a heterodimer with protein bS6 to the central domain of the 16S rRNA, where it helps stabilize the platform of the 30S subunit. The chain is Small ribosomal subunit protein bS18A from Rhodococcus jostii (strain RHA1).